We begin with the raw amino-acid sequence, 130 residues long: DUF35 domain-containing scaffold protein (130 aa).

Residues Cys-20, Cys-23, Cys-34, and Cys-37 each coordinate Zn(2+).

Belongs to the scaffold protein DUF35 family. Interacts with acetoacetyl-CoA thiolase and HMG-CoA synthase (HMGCS) that catalyzes the first and second step in the mevalonate pathway, respectively.

In terms of biological role, functions as a scaffold to connect the acetoacetyl-CoA thiolase and HMG-CoA synthase (HMGCS) dimers in the channeling thiolase/HMGCS complex, which allows for efficient coupling of the endergonic thiolase reaction with the exergonic HMGCS reaction. This Methanothermococcus thermolithotrophicus (Methanococcus thermolithotrophicus) protein is DUF35 domain-containing scaffold protein.